Here is a 478-residue protein sequence, read N- to C-terminus: MKMSIRTPPRLLELAGRSLLRDQALAMSTLEELPTELFPPLFMEAFSRRCCEALKLMVQAWPFRRLPLRPLIKMPCLEAFQAVLDGLDALLTQGVCPRRWKLQVLDLQDVCENFWMVWSEAMARGSFLNAKRNKTPVQDCPRMRGQQPLTVFVELWLKNRTLDEYLTYLLLWVKQRKDLLHLCCKKLKILGMPFRNIRSILKMVNLDCIQEVEVNCKWVLPILTQFTPYLGHMRNLQKLVLSHMDVSRYVSPEQKKEIVTQFTTQFLKLHCLQKLYMNSVSFLEGHLDQLLSCLKTSLKVLTITNCVLLESDLKHLSQCPSISQLKTLDLSGIRLTNYSLVPLQILLEKVAATLEYLDLDDCGIIDSQVNAILPALSRCFELNAFSFCGNPISMATLENLLSHTIILKNLCVEVYPAPRESYGADGTLCWNRFAQIRAELMNRVRDLRHPKRIFFCIDNCPDCGNRSFYDLEADQYCC.

The stretch at 17 to 40 (RSLLRDQALAMSTLEELPTELFPP) is one LRR 1 repeat. Residues 99-126 (RWKLQVLDLQDVCENFWMVWSEAMARGS) form an LRR 1; degenerate repeat. Residues 181-205 (HLCCKKLKILGMPFRNIRSILKMVN) form an LRR 2; degenerate repeat. Residues 206–232 (LDCIQEVEVNCKWVLPILTQFTPYLGH) form an LRR 3; degenerate repeat. An LRR 4; degenerate repeat occupies 233-268 (MRNLQKLVLSHMDVSRYVSPEQKKEIVTQFTTQFLK). 5 LRR repeats span residues 269-294 (LHCL…LSCL), 295-326 (KTSL…SQLK), 327-348 (TLDL…ILLE), 351-378 (AATL…ALSR), and 379-403 (CFEL…LLSH).

The protein belongs to the PRAME family.

This is PRAME family member 27 from Homo sapiens (Human).